Here is a 212-residue protein sequence, read N- to C-terminus: Ependymin (212 aa).

The first 20 residues, 1–20, serve as a signal peptide directing secretion; it reads MRLTGLLCVALWSASAVVLA. 3 N-linked (GlcNAc...) asparagine glycosylation sites follow: Asn69, Asn92, and Asn112.

Belongs to the ependymin family. In terms of assembly, forms disulfide-linked dimers. Post-translationally, binds calcium through the terminal sialic acids. EPDs are synthesized in the meninx and secreted in the cerebrospinal fluid.

It localises to the secreted. Functionally, may play a role in neural plasticity. May be involved during axon regeneration. This chain is Ependymin (epd), found in Clupea harengus (Atlantic herring).